We begin with the raw amino-acid sequence, 104 residues long: Small ribosomal subunit protein bS18c (104 aa).

It belongs to the bacterial ribosomal protein bS18 family. As to quaternary structure, part of the 30S ribosomal subunit.

The protein resides in the plastid. Its subcellular location is the chloroplast. The chain is Small ribosomal subunit protein bS18c from Lotus japonicus (Lotus corniculatus var. japonicus).